Consider the following 199-residue polypeptide: Recombination protein RecR (199 aa).

The segment at 56–71 (CATCGNVAQEEQCNIC) adopts a C4-type zinc-finger fold. The 96-residue stretch at 79-174 (SVICVVEEPK…KVTRLASGLP (96 aa)) folds into the Toprim domain.

It belongs to the RecR family.

May play a role in DNA repair. It seems to be involved in an RecBC-independent recombinational process of DNA repair. It may act with RecF and RecO. This is Recombination protein RecR from Streptomyces coelicolor (strain ATCC BAA-471 / A3(2) / M145).